We begin with the raw amino-acid sequence, 115 residues long: Small ribosomal subunit protein bS6 (115 aa).

The protein belongs to the bacterial ribosomal protein bS6 family.

Its function is as follows. Binds together with bS18 to 16S ribosomal RNA. The sequence is that of Small ribosomal subunit protein bS6 from Syntrophotalea carbinolica (strain DSM 2380 / NBRC 103641 / GraBd1) (Pelobacter carbinolicus).